The primary structure comprises 141 residues: Small ribosomal subunit protein uS12 (141 aa).

This sequence belongs to the universal ribosomal protein uS12 family. In terms of assembly, part of the 30S ribosomal subunit.

Functionally, with S4 and S5 plays an important role in translational accuracy. Located at the interface of the 30S and 50S subunits. This chain is Small ribosomal subunit protein uS12, found in Methanothermobacter thermautotrophicus (strain ATCC 29096 / DSM 1053 / JCM 10044 / NBRC 100330 / Delta H) (Methanobacterium thermoautotrophicum).